We begin with the raw amino-acid sequence, 340 residues long: N-acetyl-gamma-glutamyl-phosphate reductase (340 aa).

Residue C147 is part of the active site.

It belongs to the NAGSA dehydrogenase family. Type 1 subfamily.

Its subcellular location is the cytoplasm. The enzyme catalyses N-acetyl-L-glutamate 5-semialdehyde + phosphate + NADP(+) = N-acetyl-L-glutamyl 5-phosphate + NADPH + H(+). It functions in the pathway amino-acid biosynthesis; L-arginine biosynthesis; N(2)-acetyl-L-ornithine from L-glutamate: step 3/4. Functionally, catalyzes the NADPH-dependent reduction of N-acetyl-5-glutamyl phosphate to yield N-acetyl-L-glutamate 5-semialdehyde. The chain is N-acetyl-gamma-glutamyl-phosphate reductase from Lactococcus lactis subsp. lactis (strain IL1403) (Streptococcus lactis).